The sequence spans 565 residues: NAD-dependent malic enzyme (565 aa).

The Proton donor role is filled by tyrosine 104. Arginine 157 provides a ligand contact to NAD(+). Lysine 175 acts as the Proton acceptor in catalysis. Residues glutamate 246, aspartate 247, and aspartate 270 each contribute to the a divalent metal cation site. Positions 270 and 418 each coordinate NAD(+).

The protein belongs to the malic enzymes family. In terms of assembly, homotetramer. It depends on Mg(2+) as a cofactor. The cofactor is Mn(2+).

It catalyses the reaction (S)-malate + NAD(+) = pyruvate + CO2 + NADH. The catalysed reaction is oxaloacetate + H(+) = pyruvate + CO2. In Salmonella arizonae (strain ATCC BAA-731 / CDC346-86 / RSK2980), this protein is NAD-dependent malic enzyme.